A 757-amino-acid chain; its full sequence is Filensin (757 aa).

The segment at 1 to 39 (MYRRSYVFQTRKEQYERAEEAPRAAEPDRLAEARAAAPN) is head. Serine 5 is modified (phosphoserine). The 281-residue stretch at 39–319 (NLAALQGLGE…RIIENEGNRL (281 aa)) folds into the IF rod domain. The tract at residues 40-74 (LAALQGLGERVAAHVQRARALEQRHAVLRRQLDAF) is coil 1A. Alanine 41 is subject to N-acetylalanine. The segment at 75–83 (QRLDELAGP) is linker 1. The coil 1B stretch occupies residues 84–183 (EDALARHVEG…RYKKNLLEIQ (100 aa)). A linker 12 region spans residues 184-200 (TYVTILQQIIQTTPQAA). Residues 201–319 (AITSGMREEK…RIIENEGNRL (119 aa)) form a coil 2 region. The segment at 320–756 (SSAFIETPIT…KKLGEKGSSS (437 aa)) is tail. A phosphoserine mark is found at serine 340 and serine 419. Disordered stretches follow at residues 406-436 (EGESKLEPGDEEASPPTQEGAPEDVPDGGKI) and 493-705 (GVVV…PPRK). The N-myristoyl glycine moiety is linked to residue glycine 433. Residues 493–512 (GVVVSKGDDSVPPDSGVEPS) show a composition bias toward low complexity. Serine 512 carries the phosphoserine modification. Residues 528–658 (QEKEDGLKEE…KQDDQKEEGA (131 aa)) show a composition bias toward basic and acidic residues. Repeat unit 1 spans residues 532-545 (DGLKEEGGPPEGKG). Positions 532–622 (DGLKEEGGPP…EEEGPLQKKE (91 aa)) are 7 X 14 AA tandem repeats. A 2; truncated repeat occupies 546–552 (EPPEGKG). Tandem repeats lie at residues 553–566 (DSVKEEGGPPEGKG), 567–580 (DGVKEEGGPPEGKG), 581–594 (DGVKEEGGPPEGKG), 595–608 (DGVKKEGEPPEGKG), and 609–622 (EGLKEEEGPLQKKE). Residues threonine 628 and threonine 674 each carry the phosphothreonine modification. Serine 701, serine 754, and serine 755 each carry phosphoserine.

This sequence belongs to the intermediate filament family. In terms of assembly, part of a complex required for lens intermediate filament formation composed of BFSP1, BFSP2 and CRYAA. Identified in a complex that contains VIM, EZR, AHNAK, BFSP1, BFSP2, ANK2, PLEC, PRX and spectrin. Found in a complex composed of PPL (via C-terminal linker domain), BFSP1 and BFSP2 in the retinal lens. Within the complex interacts with BFSP2. Interacts (via C-terminus) with MIP (via C-terminus) in aged lens fiber cells. In terms of processing, proteolytically cleaved during lens cell fiber differentiation with increased fragmentation as fiber cell age increases. Myristoylated at Gly-433 following proteolytic cleavage at Asp-432. Post-translationally, acetylated at Ala-41 following proteolytic cleavage at Leu-40. In terms of tissue distribution, abundantly expressed in both the inner and outer cortex of the retina, expressed at a lower level in the nucleus of the retina (at protein level). Detected in eye lens fiber cells (at protein level).

Its subcellular location is the cell membrane. The protein resides in the cytoplasm. The protein localises to the cytoskeleton. It is found in the cell cortex. Its function is as follows. Required for the correct formation of lens intermediate filaments as part of a complex composed of BFSP1, BFSP2 and CRYAA. Involved in altering the calcium regulation of MIP water permeability. The sequence is that of Filensin (BFSP1) from Bos taurus (Bovine).